A 495-amino-acid chain; its full sequence is Probable lysine-specific demethylase 4A (495 aa).

Residues isoleucine 18–arginine 60 form the JmjN domain. Residue tyrosine 139 coordinates 2-oxoglutarate. One can recognise a JmjC domain in the interval aspartate 149–cysteine 315. Fe cation-binding residues include histidine 195 and glutamate 197. Asparagine 205 and lysine 213 together coordinate 2-oxoglutarate. Zn(2+) is bound by residues cysteine 241 and histidine 247. Lysine 248 provides a ligand contact to 2-oxoglutarate. Residue histidine 283 coordinates Fe cation. Zn(2+)-binding residues include cysteine 313 and cysteine 315. Serine 409 is subject to Phosphoserine.

It belongs to the JHDM3 histone demethylase family. It depends on Fe(2+) as a cofactor.

It localises to the nucleus. The enzyme catalyses N(6),N(6),N(6)-trimethyl-L-lysyl(9)-[histone H3] + 2 2-oxoglutarate + 2 O2 = N(6)-methyl-L-lysyl(9)-[histone H3] + 2 formaldehyde + 2 succinate + 2 CO2. It carries out the reaction N(6),N(6),N(6)-trimethyl-L-lysyl(36)-[histone H3] + 2 2-oxoglutarate + 2 O2 = N(6)-methyl-L-lysyl(36)-[histone H3] + 2 formaldehyde + 2 succinate + 2 CO2. Probable histone demethylase that specifically demethylates 'Lys-9' and 'Lys-36' residues of histone H3, thereby playing a central role in histone code. Demethylation of Lys residue generates formaldehyde and succinate. The polypeptide is Probable lysine-specific demethylase 4A (Kdm4A) (Drosophila melanogaster (Fruit fly)).